The primary structure comprises 286 residues: 4-hydroxybenzoate octaprenyltransferase (286 aa).

7 helical membrane-spanning segments follow: residues 21–40 (GTLL…AGGM), 96–116 (LFVI…GLVV), 142–162 (FLGV…TGEV), 167–187 (WWLF…YAMV), 210–230 (QIIG…GWSA), 235–255 (LYGL…MLIF), and 266–286 (FLNN…DYLF).

The protein belongs to the UbiA prenyltransferase family. Mg(2+) is required as a cofactor.

Its subcellular location is the cell inner membrane. It carries out the reaction all-trans-octaprenyl diphosphate + 4-hydroxybenzoate = 4-hydroxy-3-(all-trans-octaprenyl)benzoate + diphosphate. The protein operates within cofactor biosynthesis; ubiquinone biosynthesis. Functionally, catalyzes the prenylation of para-hydroxybenzoate (PHB) with an all-trans polyprenyl group. Mediates the second step in the final reaction sequence of ubiquinone-8 (UQ-8) biosynthesis, which is the condensation of the polyisoprenoid side chain with PHB, generating the first membrane-bound Q intermediate 3-octaprenyl-4-hydroxybenzoate. The protein is 4-hydroxybenzoate octaprenyltransferase of Shewanella sp. (strain MR-4).